The sequence spans 379 residues: Beta sliding clamp (379 aa).

Belongs to the beta sliding clamp family. Forms a ring-shaped head-to-tail homodimer around DNA which binds and tethers DNA polymerases and other proteins to the DNA. The DNA replisome complex has a single clamp-loading complex (3 tau and 1 each of delta, delta', psi and chi subunits) which binds 3 Pol III cores (1 core on the leading strand and 2 on the lagging strand) each with a beta sliding clamp dimer. Additional proteins in the replisome are other copies of gamma, psi and chi, Ssb, DNA helicase and RNA primase.

The protein localises to the cytoplasm. In terms of biological role, confers DNA tethering and processivity to DNA polymerases and other proteins. Acts as a clamp, forming a ring around DNA (a reaction catalyzed by the clamp-loading complex) which diffuses in an ATP-independent manner freely and bidirectionally along dsDNA. Initially characterized for its ability to contact the catalytic subunit of DNA polymerase III (Pol III), a complex, multichain enzyme responsible for most of the replicative synthesis in bacteria; Pol III exhibits 3'-5' exonuclease proofreading activity. The beta chain is required for initiation of replication as well as for processivity of DNA replication. The chain is Beta sliding clamp (dnaN) from Rickettsia felis (strain ATCC VR-1525 / URRWXCal2) (Rickettsia azadi).